The following is a 438-amino-acid chain: GTPase Der (438 aa).

EngA-type G domains are found at residues P4–S168 and T177–S352. Residues G10–S17, D57–L61, N120–D123, G183–S190, D230–L234, and N295–D298 each bind GTP. In terms of domain architecture, KH-like spans M353 to G437.

Belongs to the TRAFAC class TrmE-Era-EngA-EngB-Septin-like GTPase superfamily. EngA (Der) GTPase family. Associates with the 50S ribosomal subunit.

In terms of biological role, GTPase that plays an essential role in the late steps of ribosome biogenesis. The polypeptide is GTPase Der (Finegoldia magna (strain ATCC 29328 / DSM 20472 / WAL 2508) (Peptostreptococcus magnus)).